The chain runs to 303 residues: L(+)-tartrate dehydratase subunit alpha (303 aa).

The iron-sulfur cluster site is built by Cys-71, Cys-190, and Cys-277.

This sequence belongs to the class-I fumarase family. Tetramer of two alpha and two beta subunits. The cofactor is iron-sulfur cluster.

It carries out the reaction (2R,3R)-tartrate = oxaloacetate + H2O. This chain is L(+)-tartrate dehydratase subunit alpha (ttdA), found in Escherichia coli O6:K15:H31 (strain 536 / UPEC).